We begin with the raw amino-acid sequence, 272 residues long: NH(3)-dependent NAD(+) synthetase (272 aa).

Residue 45–52 (GISGGQDS) coordinates ATP. Asp51 lines the Mg(2+) pocket. Residue Arg138 participates in deamido-NAD(+) binding. Residue Thr158 participates in ATP binding. Glu163 provides a ligand contact to Mg(2+). The deamido-NAD(+) site is built by Lys171 and Asp178. Positions 187 and 209 each coordinate ATP. 258 to 259 (HK) is a binding site for deamido-NAD(+).

Belongs to the NAD synthetase family. Homodimer.

The enzyme catalyses deamido-NAD(+) + NH4(+) + ATP = AMP + diphosphate + NAD(+) + H(+). It functions in the pathway cofactor biosynthesis; NAD(+) biosynthesis; NAD(+) from deamido-NAD(+) (ammonia route): step 1/1. Its function is as follows. Catalyzes the ATP-dependent amidation of deamido-NAD to form NAD. Uses ammonia as a nitrogen source. This Bacillus cereus (strain Q1) protein is NH(3)-dependent NAD(+) synthetase.